Consider the following 1003-residue polypeptide: MSSQPLTLQAMMAAILNFWSEQGCIIHQGYDLEVGAGTFNPATFLQSLGPEPFRTAYIEPSRRPQDGRYGQHPNRLQKYHQLQVILKPVPENFLSLYLESLKVIGLNLVDHDIRFVHDDWENPTIGAWGLGWEVWLNGMEITQLTYFQAVGSKPLDAISGEITYGVERIAMYLQKKNSVYDVMWNGSLTYGDITQYAEQAWSQYNFETANTTMWLKHFDDFSAEALATLDQGLPLPAYDFVIKASHAFNMLDSRGVISVTERTRYIAKIRQLARAAADKYVAWRESLGFPLLKTPPSTPTVTPKKIPTICQPEDFLLEIGSEELPATFVPTGIQQLESLAKKLLADHGIAYKHLEVLGTPRRLALCIEGLSHVTIRPESEKKGPPLSLLFMTDGSVSPQGEQFFPSHGLSISHRSALDQPSAICRVRSINGTDYLFLVIPEERKETAAILVNELPQLIRSIRFPQKMTWDNGGVEYARPIRWLVALYGDQILPISLGFVSSGNTSWGHRQLDNRQLTIPSSNMYVDTLRSACVIVSQKERRAIIKQGLQNLTGDQIVAIAPEHLVDETVFLTEHPFVISAQFDPAFCSLPKELLIAEMIQHQRYFPTQNMQGEITNRFLIVCDNSPTDSIVEGNEKALAPRLTDGNFLFKQDLLTPLSSFVEKLKSVTYFESLGSLADKTSRLKLHLEEAYALLPLCAKEDIDTAIHYCKADLVSSVVNEFPELQGIMGRYYLQNASLSRAAALAIGEHLQHITLGSNISTTGALLSILDRIDNLLSCFILGLLPTSSHDPYALRRQSLEILTLLYTTQSSVDIEDLFARLIRHFPSSIPNTVWSPEEVLSKLNTFVWGRLRTILSSLGFDKEIIATVLTDNCPKNPLTIIQSAQSIQELKNTQILKTIAATHNRLKKILASLSFSVTEQMFSLQSAEDLLFKQALDRFVEETTALPISSKDYLHLLKELAQSTELFLDSVRVASDDESTRNQRIALLIAAQKCFGFYAWDVL.

Residues 1–310 are glycine--tRNA ligase alpha subunit; sequence MSSQPLTLQA…VTPKKIPTIC (310 aa). The glycine--tRNA ligase beta subunit stretch occupies residues 311-1003; sequence QPEDFLLEIG…CFGFYAWDVL (693 aa).

It belongs to the class-II aminoacyl-tRNA synthetase family.

It localises to the cytoplasm. The enzyme catalyses tRNA(Gly) + glycine + ATP = glycyl-tRNA(Gly) + AMP + diphosphate. The sequence is that of Glycine--tRNA ligase (glyQS) from Chlamydia trachomatis serovar L2 (strain ATCC VR-902B / DSM 19102 / 434/Bu).